The following is a 302-amino-acid chain: Heme A synthase (302 aa).

Residues Met-1 to Lys-8 lie on the Cytoplasmic side of the membrane. The chain crosses the membrane as a helical span at residues Trp-9 to Thr-29. Topologically, residues Lys-30–Ser-67 are extracellular. A disulfide bond links Cys-37 and Cys-44. Glu-60 is an active-site residue. Position 63 (His-63) interacts with heme o. A helical transmembrane segment spans residues Gly-68 to Ile-88. Residues Lys-89–Pro-93 are Cytoplasmic-facing. Residues Leu-94 to Met-114 form a helical membrane-spanning segment. Over Trp-115–Leu-122 the chain is Extracellular. A helical transmembrane segment spans residues Ala-123–Ile-143. His-125 serves as a coordination point for heme o. Over Tyr-144–Leu-161 the chain is Cytoplasmic. A helical transmembrane segment spans residues Arg-162 to Val-182. Topologically, residues Arg-183–Arg-215 are extracellular. Residue His-214 coordinates heme b. The helical transmembrane segment at Gly-216–Tyr-236 threads the bilayer. Residues Arg-237 to Tyr-244 lie on the Cytoplasmic side of the membrane. The chain crosses the membrane as a helical span at residues Gly-245 to Ile-265. Topologically, residues Thr-266–Phe-271 are extracellular. A helical transmembrane segment spans residues Ile-272–Ile-292. His-276 contributes to the heme b binding site. Residues Leu-293–Gly-302 lie on the Cytoplasmic side of the membrane.

The protein belongs to the COX15/CtaA family. Type 1 subfamily. Interacts with CtaB. The cofactor is heme b.

The protein resides in the cell membrane. The catalysed reaction is Fe(II)-heme o + 2 A + H2O = Fe(II)-heme a + 2 AH2. It participates in porphyrin-containing compound metabolism; heme A biosynthesis; heme A from heme O: step 1/1. Its function is as follows. Catalyzes the conversion of heme O to heme A by two successive hydroxylations of the methyl group at C8. The first hydroxylation forms heme I, the second hydroxylation results in an unstable dihydroxymethyl group, which spontaneously dehydrates, resulting in the formyl group of heme A. The protein is Heme A synthase of Staphylococcus saprophyticus subsp. saprophyticus (strain ATCC 15305 / DSM 20229 / NCIMB 8711 / NCTC 7292 / S-41).